Here is a 37-residue protein sequence, read N- to C-terminus: Cytochrome b6-f complex subunit 5 (37 aa).

A helical transmembrane segment spans residues 5–25 (LLFGIVLGLIPVTLVGLFVAA).

It belongs to the PetG family. The 4 large subunits of the cytochrome b6-f complex are cytochrome b6, subunit IV (17 kDa polypeptide, PetD), cytochrome f and the Rieske protein, while the 4 small subunits are PetG, PetL, PetM and PetN. The complex functions as a dimer.

It localises to the plastid. The protein localises to the chloroplast thylakoid membrane. Component of the cytochrome b6-f complex, which mediates electron transfer between photosystem II (PSII) and photosystem I (PSI), cyclic electron flow around PSI, and state transitions. PetG is required for either the stability or assembly of the cytochrome b6-f complex. The protein is Cytochrome b6-f complex subunit 5 of Rhodomonas salina (Cryptomonas salina).